The chain runs to 498 residues: Tumor necrosis factor receptor superfamily member 8 (498 aa).

Residues 1-18 (MSALLTAAGLLFLGMLQA) form the signal peptide. Over 19-287 (FPTDRPLKTT…STGTPFLDPG (269 aa)) the chain is Extracellular. TNFR-Cys repeat units lie at residues 68 to 105 (QCAPDYYVNEDGKCTACVTCLPGLVEKAPCSGNSPRIC) and 106 to 146 (ECQP…DTIC). Cystine bridges form between cysteine 69–cysteine 81, cysteine 84–cysteine 97, cysteine 87–cysteine 105, cysteine 107–cysteine 121, and cysteine 128–cysteine 146. The disordered stretch occupies residues 142–168 (KDTICELPSSGSGPNCSNPGDRKTLTS). Residues 149–160 (PSSGSGPNCSNP) are compositionally biased toward low complexity. N-linked (GlcNAc...) asparagine glycans are attached at residues asparagine 156, asparagine 183, and asparagine 229. The disordered stretch occupies residues 204–256 (ELVKVPESSSSKAREPSPDPGNAEKNMTLELPSPGTLPDISTSENSKEPASTA). Residues 242–256 (DISTSENSKEPASTA) show a composition bias toward polar residues. The helical transmembrane segment at 288-308 (PVLFWVAMVVLLVGSGSFLLC) threads the bilayer. The Cytoplasmic portion of the chain corresponds to 309 to 498 (YWKACRRRFQ…DHGPTTVSEK (190 aa)). The segment covering 338–358 (DSCPTEKLTQPQRSGSVTDPS) has biased composition (polar residues). Disordered regions lie at residues 338–370 (DSCPTEKLTQPQRSGSVTDPSTGHKLSPVSPPP), 389–411 (LDDSPAGNPFSPREPPEPRVSTE), and 436–498 (EVPE…VSEK). Residues serine 339 and serine 353 each carry the phosphoserine modification. Composition is skewed to basic and acidic residues over residues 402-411 (EPPEPRVSTE), 456-465 (EVDHAPHYPE), and 484-498 (EGGKEDHGPTTVSEK).

The protein belongs to the TNFR8 family. In terms of assembly, interacts with TRAF1, TRAF2, TRAF3 and TRAF5. As to expression, detected in thymus and in activated splenocytes.

Its subcellular location is the cell membrane. In terms of biological role, receptor for TNFSF8/CD30L. May play a role in the regulation of cellular growth and transformation of activated lymphoblasts. Regulates gene expression through activation of NF-kappa-B. The protein is Tumor necrosis factor receptor superfamily member 8 of Mus musculus (Mouse).